The following is a 221-amino-acid chain: Histidine biosynthesis bifunctional protein HisIE (221 aa).

The tract at residues 1 to 121 (MNITKIDWQK…KKQQFANWAW (121 aa)) is phosphoribosyl-AMP cyclohydrolase. Residues 122 to 221 (FIKLEQHLKE…IGLHPEGGNK (100 aa)) are phosphoribosyl-ATP pyrophosphohydrolase.

This sequence in the N-terminal section; belongs to the PRA-CH family. It in the C-terminal section; belongs to the PRA-PH family.

It is found in the cytoplasm. It catalyses the reaction 1-(5-phospho-beta-D-ribosyl)-ATP + H2O = 1-(5-phospho-beta-D-ribosyl)-5'-AMP + diphosphate + H(+). The catalysed reaction is 1-(5-phospho-beta-D-ribosyl)-5'-AMP + H2O = 1-(5-phospho-beta-D-ribosyl)-5-[(5-phospho-beta-D-ribosylamino)methylideneamino]imidazole-4-carboxamide. It participates in amino-acid biosynthesis; L-histidine biosynthesis; L-histidine from 5-phospho-alpha-D-ribose 1-diphosphate: step 2/9. It functions in the pathway amino-acid biosynthesis; L-histidine biosynthesis; L-histidine from 5-phospho-alpha-D-ribose 1-diphosphate: step 3/9. In Haemophilus influenzae (strain ATCC 51907 / DSM 11121 / KW20 / Rd), this protein is Histidine biosynthesis bifunctional protein HisIE (hisI).